We begin with the raw amino-acid sequence, 139 residues long: Inactive palmitoleoyl-protein carboxylesterase notum1b (139 aa).

Belongs to the pectinacetylesterase family. Notum subfamily.

Its function is as follows. Probable inactive palmitoleoyl-protein carboxylesterase. This is Inactive palmitoleoyl-protein carboxylesterase notum1b from Danio rerio (Zebrafish).